The primary structure comprises 175 residues: Dof zinc finger protein DOF1.5 (175 aa).

The disordered stretch occupies residues E29 to R57. Polar residues predominate over residues P37 to L52. The Dof-type zinc-finger motif lies at I62–P116. C64, C67, C89, and C92 together coordinate Zn(2+). The Nuclear localization signal motif lies at P162 to C168.

It is found in the nucleus. Transcription factor that binds specifically to a 5'-AA[AG]G-3' consensus core sequence. Acts as a negative regulator in the phytochrome-mediated light responses. Controls phyB-mediated end-of-day response and the phyA-mediated anthocyanin accumulation. Not involved in direct flowering time regulation. This is Dof zinc finger protein DOF1.5 (DOF1.5) from Arabidopsis thaliana (Mouse-ear cress).